We begin with the raw amino-acid sequence, 148 residues long: MEIDDLDRKILSLLIEDSRLSYREIAKKLNVAVGTIYNRIKKLEDMGVIQGFTVKLNYEKLGYELTAIIGIKAQGKKIREIERIIARDKHVTCVYDVTGEYDIIVIAKFRSREDMNRFVKSVLSVDGVEKTNTHVALEIVKEDFRLEP.

The region spanning 3–64 (IDDLDRKILS…KLNYEKLGYE (62 aa)) is the HTH asnC-type domain. Positions 22 to 41 (YREIAKKLNVAVGTIYNRIK) form a DNA-binding region, H-T-H motif.

This is an uncharacterized protein from Pyrococcus furiosus (strain ATCC 43587 / DSM 3638 / JCM 8422 / Vc1).